The primary structure comprises 582 residues: Adenine deaminase (582 aa).

Belongs to the metallo-dependent hydrolases superfamily. Adenine deaminase family. It depends on Mn(2+) as a cofactor.

The catalysed reaction is adenine + H2O + H(+) = hypoxanthine + NH4(+). This is Adenine deaminase from Oceanobacillus iheyensis (strain DSM 14371 / CIP 107618 / JCM 11309 / KCTC 3954 / HTE831).